Consider the following 221-residue polypeptide: Mediator of RNA polymerase II transcription subunit 19a (221 aa).

Residues 101–221 form a disordered region; sequence PVELPPAEKG…DEVGAIRVAG (121 aa). A compositionally biased stretch (basic residues) spans 142–152; that stretch reads EHKKHKHKHKD. The segment covering 153–178 has biased composition (basic and acidic residues); it reads RSKDKDKDKDRDRKKDKNGHHDSGDH. Basic residues predominate over residues 179 to 188; the sequence is SKKHHDKKRK.

The protein belongs to the plant Mediator complex subunit 19 family. As to quaternary structure, component of the Mediator complex. Interacts with FIB2.

It is found in the nucleus. Its function is as follows. Component of the Mediator complex, a coactivator involved in the regulated transcription of nearly all RNA polymerase II-dependent genes. Mediator functions as a bridge to convey information from gene-specific regulatory proteins to the basal RNA polymerase II transcription machinery. The Mediator complex, having a compact conformation in its free form, is recruited to promoters by direct interactions with regulatory proteins and serves for the assembly of a functional preinitiation complex with RNA polymerase II and the general transcription factors. The polypeptide is Mediator of RNA polymerase II transcription subunit 19a (MED19A) (Arabidopsis thaliana (Mouse-ear cress)).